Here is a 492-residue protein sequence, read N- to C-terminus: Cysteine--tRNA ligase (492 aa).

Zn(2+) is bound at residue Cys-29. The 'HIGH' region signature appears at 31-41; the sequence is PTVYDYAHIGN. Zn(2+) contacts are provided by Cys-222, His-247, and Glu-251. Residues 279-283 carry the 'KMSKS' region motif; that stretch reads KMSKS. An ATP-binding site is contributed by Lys-282.

It belongs to the class-I aminoacyl-tRNA synthetase family. As to quaternary structure, monomer. Requires Zn(2+) as cofactor.

Its subcellular location is the cytoplasm. The catalysed reaction is tRNA(Cys) + L-cysteine + ATP = L-cysteinyl-tRNA(Cys) + AMP + diphosphate. In Treponema denticola (strain ATCC 35405 / DSM 14222 / CIP 103919 / JCM 8153 / KCTC 15104), this protein is Cysteine--tRNA ligase.